The chain runs to 401 residues: Pleckstrin homology-like domain family A member 1 (401 aa).

Disordered stretches follow at residues 39-67 (IQKRREGARPVPFSERSQEDGRGPAARSS), 190-222 (QQQQQQQQQQQQQQQPGQGPAEPSQPSGPAVAS), and 293-401 (KSTR…SNSA). The 133-residue stretch at 151-283 (LKEGVLEKRS…AEITLQMVQY (133 aa)) folds into the PH domain. The span at 190–204 (QQQQQQQQQQQQQQQ) shows a compositional bias: low complexity. The segment covering 308–344 (PSQPQPQPQLQPQPQPQPQPQPQPQSQPQPQPQPKPQ) has biased composition (pro residues). The segment at 311-346 (PQPQPQLQPQPQPQPQPQPQPQSQPQPQPQPKPQPQ) is 15 X 2 AA repeats of P-Q. The span at 352-378 (PHPHPHPHSHPHSHPHPHPHPHPHQIP) shows a compositional bias: basic residues. The interval 352-389 (PHPHPHPHSHPHSHPHPHPHPHPHQIPHPHPQPHSQPH) is 14 X 2 AA repeats of P-H.

In terms of assembly, interacts with RPL14, EIF3S7 and PABPC4. In terms of tissue distribution, widely expressed with highest levels in pancreas. Strongly expressed by benign melanocytic nevi, and progressively reduced expressed in primary and metastatic melanomas (at protein level).

The protein localises to the cytoplasm. Its subcellular location is the cytoplasmic vesicle. The protein resides in the nucleus. It is found in the nucleolus. Functionally, seems to be involved in regulation of apoptosis. May be involved in detachment-mediated programmed cell death. May mediate apoptosis during neuronal development. May be involved in regulation of anti-apoptotic effects of IGF1. May be involved in translational regulation. This is Pleckstrin homology-like domain family A member 1 (PHLDA1) from Homo sapiens (Human).